The primary structure comprises 194 residues: uncharacterized protein (194 aa).

A helical membrane pass occupies residues 17–37; that stretch reads DVWLYLLVFGCLSVLVLVLVH.

The protein belongs to the IIV-6 307L family.

The protein localises to the membrane. This is an uncharacterized protein from Invertebrate iridescent virus 3 (IIV-3).